The following is an 83-amino-acid chain: Small ribosomal subunit protein bS16 (83 aa).

This sequence belongs to the bacterial ribosomal protein bS16 family.

This Verminephrobacter eiseniae (strain EF01-2) protein is Small ribosomal subunit protein bS16.